A 249-amino-acid polypeptide reads, in one-letter code: MAEDAPVVQQTMLEPEVLLKKRKVNERTRKERVEQAIAKKEAQKKNRKETFKRAETFINNYRQRERERIRLNRSAKNKGDIFVPDETKLLFVIRIAGVKNMPPKIRKVLRLLRLSRINNAVFVRNNKAVAQMLRIVEPYVMYGIPNLHSVRELIYKRGFGKINGQRIALSDNALIEEALGKYDVISIEDIIHEIYNVGSHFKEVTKFLWPFTLTPVKHSLMEKKVKHFNEGRKAGYCGEEINELIKKQV.

The protein belongs to the universal ribosomal protein uL30 family. In terms of assembly, component of the small ribosomal subunit (SSU). Mature yeast ribosomes consist of a small (40S) and a large (60S) subunit. The 40S small subunit contains 1 molecule of ribosomal RNA (18S rRNA) and at least 33 different proteins. The large 60S subunit contains 3 rRNA molecules (25S, 5.8S and 5S rRNA) and at least 46 different proteins.

The protein resides in the cytoplasm. It is found in the nucleus. It localises to the nucleolus. In terms of biological role, component of the ribosome, a large ribonucleoprotein complex responsible for the synthesis of proteins in the cell. The small ribosomal subunit (SSU) binds messenger RNAs (mRNAs) and translates the encoded message by selecting cognate aminoacyl-transfer RNA (tRNA) molecules. The large subunit (LSU) contains the ribosomal catalytic site termed the peptidyl transferase center (PTC), which catalyzes the formation of peptide bonds, thereby polymerizing the amino acids delivered by tRNAs into a polypeptide chain. The nascent polypeptides leave the ribosome through a tunnel in the LSU and interact with protein factors that function in enzymatic processing, targeting, and the membrane insertion of nascent chains at the exit of the ribosomal tunnel. The sequence is that of Large ribosomal subunit protein uL30A (rlp7) from Schizosaccharomyces pombe (strain 972 / ATCC 24843) (Fission yeast).